We begin with the raw amino-acid sequence, 135 residues long: Galectin-1 (135 aa).

An N-acetylalanine modification is found at A2. In terms of domain architecture, Galectin spans 4 to 135 (GLVASNLNLK…DFKIKCVAFE (132 aa)). N6-acetyllysine occurs at positions 13 and 29. A Phosphoserine modification is found at S30. A beta-D-galactoside contacts are provided by residues 45–49 (HFNPR), H53, N62, and 69–72 (WGAE). K108 carries the post-translational modification N6-acetyllysine; alternate. The residue at position 108 (K108) is an N6-succinyllysine; alternate. N6-acetyllysine is present on K128.

In terms of assembly, homodimer. Binds LGALS3BP. Interacts with CD2, CD3, CD4, CD6, CD7, CD43, ALCAM and CD45. Interacts with laminin (via poly-N-acetyllactosamine). Interacts with SUSD2. Interacts with cargo receptor TMED10; the interaction mediates the translocation from the cytoplasm into the ERGIC (endoplasmic reticulum-Golgi intermediate compartment) and thereby secretion.

The protein localises to the secreted. It localises to the extracellular space. Its subcellular location is the extracellular matrix. The protein resides in the cytoplasm. Functionally, lectin that binds beta-galactoside and a wide array of complex carbohydrates. Plays a role in regulating apoptosis, cell proliferation and cell differentiation. Inhibits CD45 protein phosphatase activity and therefore the dephosphorylation of Lyn kinase. Strong inducer of T-cell apoptosis. In Bos taurus (Bovine), this protein is Galectin-1 (LGALS1).